Here is a 358-residue protein sequence, read N- to C-terminus: Magnesium-protoporphyrin IX monomethyl ester [oxidative] cyclase 2 (358 aa).

The protein belongs to the AcsF family. Fe cation serves as cofactor.

It catalyses the reaction Mg-protoporphyrin IX 13-monomethyl ester + 3 NADPH + 3 O2 + 2 H(+) = 3,8-divinyl protochlorophyllide a + 3 NADP(+) + 5 H2O. Its pathway is porphyrin-containing compound metabolism; chlorophyll biosynthesis (light-independent). In terms of biological role, catalyzes the formation of the isocyclic ring in chlorophyll biosynthesis. Mediates the cyclase reaction, which results in the formation of divinylprotochlorophyllide (Pchlide) characteristic of all chlorophylls from magnesium-protoporphyrin IX 13-monomethyl ester (MgPMME). The polypeptide is Magnesium-protoporphyrin IX monomethyl ester [oxidative] cyclase 2 (Nostoc sp. (strain PCC 7120 / SAG 25.82 / UTEX 2576)).